A 707-amino-acid polypeptide reads, in one-letter code: Metal transporter CNNM3 (707 aa).

A helical transmembrane segment spans residues Leu11–Ala27. Residue Asn73 is glycosylated (N-linked (GlcNAc...) asparagine). The CNNM transmembrane domain occupies Glu130–Val308. Helical transmembrane passes span Cys193–Leu213, Ala221–Ala241, and Leu261–Ala281. CBS domains are found at residues Leu318–Leu379 and Tyr386–Glu452. Ser661 is subject to Phosphoserine. The segment covering Leu678–Ser691 has biased composition (polar residues). A disordered region spans residues Leu678–Val707. A Phosphoserine modification is found at Ser700.

It belongs to the ACDP family. In terms of tissue distribution, widely expressed. Expressed at higher level in heart and spleen.

Its subcellular location is the cell membrane. Probable metal transporter. The chain is Metal transporter CNNM3 (CNNM3) from Homo sapiens (Human).